Reading from the N-terminus, the 523-residue chain is Heparanase (523 aa).

The first 18 residues, 1 to 18, serve as a signal peptide directing secretion; it reads MLVLLLLVLLLAVPPRRT. Residues 42–44, threonine 77, and 137–141 each bind heparan sulfate group; these read DAS and KKHKN. 2 N-linked (GlcNAc...) asparagine glycosylation sites follow: asparagine 141 and asparagine 196. Glutamate 204 (proton donor) is an active-site residue. Residues 250–260, histidine 276, and arginine 283 each bind heparan sulfate group; that span reads QPRKHTQHLLR. The required for heterodimerization with the heparanase 8 kDa subunit stretch occupies residues 268-397; that stretch reads KAIDSVTWHH…LLYKRLVGTR (130 aa). Glutamate 323 acts as the Nucleophile in catalysis. Heparan sulfate group contacts are provided by residues 328-330 and 369-371; these read YGG and GSY. Cysteine 417 and cysteine 522 are oxidised to a cystine. Asparagine 436 and asparagine 439 each carry an N-linked (GlcNAc...) asparagine glycan. Residues 507 to 523 are required for transferring proheparanase to the Golgi apparatus, secretion and subsequent enzyme activity and for enhancement of PKB/AKT1 phosphorylation; it reads FSYGFYVIRNAKAIACI.

The protein belongs to the glycosyl hydrolase 79 family. As to quaternary structure, heterodimer; the active enzyme is a heterodimer of the 60 kDa and 45 kDa proteolytic products. In terms of processing, N-glycosylated. Proteolytically cleaved to produce a 60 kDa and a 45 kDa product.

Its subcellular location is the secreted. It carries out the reaction endohydrolysis of (1-&gt;4)-beta-D-glycosidic bonds of heparan sulfate chains in heparan sulfate proteoglycan.. Its function is as follows. Endoglycosidase that cleaves heparan sulfate proteoglycans (HSPGs) into heparan sulfate side chains and core proteoglycans. Participates in extracellular matrix (ECM) degradation and remodeling. Selectively cleaves the linkage between a glucuronic acid unit and an N-sulfo glucosamine unit carrying either a 3-O-sulfo or a 6-O-sulfo group. Can also cleave the linkage between a glucuronic acid unit and an N-sulfo glucosamine unit carrying a 2-O-sulfo group, but not linkages between a glucuronic acid unit and a 2-O-sulfated iduronic acid moiety. Increases cell adhesion to the extracellular matrix (ECM), independent of its enzymatic activity. The sequence is that of Heparanase (HPSE) from Gallus gallus (Chicken).